A 221-amino-acid polypeptide reads, in one-letter code: UPF0328 protein ECU11_2110 (221 aa).

The protein belongs to the UPF0328 family.

The polypeptide is UPF0328 protein ECU11_2110 (Encephalitozoon cuniculi (strain GB-M1) (Microsporidian parasite)).